Consider the following 407-residue polypeptide: Peptidase T (407 aa).

Zn(2+) is bound at residue His81. Asp83 is a catalytic residue. Asp142 is a Zn(2+) binding site. Glu176 serves as the catalytic Proton acceptor. Zn(2+) contacts are provided by Glu177, Asp199, and His381.

Belongs to the peptidase M20B family. It depends on Zn(2+) as a cofactor.

The protein localises to the cytoplasm. The enzyme catalyses Release of the N-terminal residue from a tripeptide.. Functionally, cleaves the N-terminal amino acid of tripeptides. The chain is Peptidase T from Streptococcus sanguinis (strain SK36).